Consider the following 509-residue polypeptide: Meiotically up-regulated gene 157 protein (509 aa).

Helical transmembrane passes span 4–24, 140–160, 296–316, 368–388, and 417–437; these read WQAI…NIPW, LATL…QFPY, ACVL…LSHL, ILFM…LGFV, and ISGI…SLIV.

Its subcellular location is the endoplasmic reticulum membrane. In terms of biological role, has a role in meiosis. The chain is Meiotically up-regulated gene 157 protein (mug157) from Schizosaccharomyces pombe (strain 972 / ATCC 24843) (Fission yeast).